We begin with the raw amino-acid sequence, 55 residues long: Large ribosomal subunit protein bL33 (55 aa).

Belongs to the bacterial ribosomal protein bL33 family.

The polypeptide is Large ribosomal subunit protein bL33 (Azorhizobium caulinodans (strain ATCC 43989 / DSM 5975 / JCM 20966 / LMG 6465 / NBRC 14845 / NCIMB 13405 / ORS 571)).